Reading from the N-terminus, the 348-residue chain is Uroporphyrinogen decarboxylase (348 aa).

Substrate-binding positions include 23–27 (RQAGR), Asp-72, Tyr-148, Ser-203, and His-316.

Belongs to the uroporphyrinogen decarboxylase family. In terms of assembly, homodimer.

Its subcellular location is the cytoplasm. The enzyme catalyses uroporphyrinogen III + 4 H(+) = coproporphyrinogen III + 4 CO2. It functions in the pathway porphyrin-containing compound metabolism; protoporphyrin-IX biosynthesis; coproporphyrinogen-III from 5-aminolevulinate: step 4/4. Catalyzes the decarboxylation of four acetate groups of uroporphyrinogen-III to yield coproporphyrinogen-III. The polypeptide is Uroporphyrinogen decarboxylase (Myxococcus xanthus (strain DK1622)).